The chain runs to 34 residues: N(4)-(Beta-N-acetylglucosaminyl)-L-asparaginase (34 aa).

The active-site Nucleophile is the T18.

Belongs to the Ntn-hydrolase family. As to quaternary structure, heterotetramer of two alpha and two beta chains arranged as a dimer of alpha/beta heterodimers. Cleaved into an alpha and beta chain by autocatalysis; this activates the enzyme. The N-terminal residue of the beta subunit is responsible for the nucleophile hydrolase activity. Post-translationally, N-glycosylated.

Its subcellular location is the lysosome. The enzyme catalyses N(4)-(beta-N-acetyl-D-glucosaminyl)-L-asparagine + H2O = N-acetyl-beta-D-glucosaminylamine + L-aspartate + H(+). Its function is as follows. Cleaves the GlcNAc-Asn bond which joins oligosaccharides to the peptide of asparagine-linked glycoproteins. The sequence is that of N(4)-(Beta-N-acetylglucosaminyl)-L-asparaginase (AGA) from Sus scrofa (Pig).